A 100-amino-acid polypeptide reads, in one-letter code: NAD(P)H-quinone oxidoreductase subunit 4L, chloroplastic (100 aa).

The next 3 helical transmembrane spans lie at 1–21 (MLEH…FGLI), 29–49 (ALMC…TFSN), and 60–80 (IFAI…LAIV).

The protein belongs to the complex I subunit 4L family. In terms of assembly, NDH is composed of at least 16 different subunits, 5 of which are encoded in the nucleus.

It is found in the plastid. The protein resides in the chloroplast thylakoid membrane. The enzyme catalyses a plastoquinone + NADH + (n+1) H(+)(in) = a plastoquinol + NAD(+) + n H(+)(out). It catalyses the reaction a plastoquinone + NADPH + (n+1) H(+)(in) = a plastoquinol + NADP(+) + n H(+)(out). Its function is as follows. NDH shuttles electrons from NAD(P)H:plastoquinone, via FMN and iron-sulfur (Fe-S) centers, to quinones in the photosynthetic chain and possibly in a chloroplast respiratory chain. The immediate electron acceptor for the enzyme in this species is believed to be plastoquinone. Couples the redox reaction to proton translocation, and thus conserves the redox energy in a proton gradient. This chain is NAD(P)H-quinone oxidoreductase subunit 4L, chloroplastic, found in Physcomitrium patens (Spreading-leaved earth moss).